Consider the following 284-residue polypeptide: AA14 family lytic polysaccharide monooxygenase B (284 aa).

An N-terminal signal peptide occupies residues methionine 1 to alanine 20. Asparagine 42, asparagine 96, asparagine 142, and asparagine 183 each carry an N-linked (GlcNAc...) asparagine glycan. Cysteines 197 and 218 form a disulfide.

It belongs to the polysaccharide monooxygenase AA14 family. Cu(2+) is required as a cofactor.

The protein resides in the secreted. Its function is as follows. Lytic polysaccharide monooxygenase (LPMO) that plays decomposes some specific network structures formed between cellulose and hemicellulose in the plant cell walls. Catalysis by LPMOs requires the reduction of the active-site copper from Cu(II) to Cu(I) by a reducing agent and H(2)O(2) or O(2) as a cosubstrate. The chain is AA14 family lytic polysaccharide monooxygenase B from Talaromyces rugulosus (Penicillium rugulosum).